Here is a 381-residue protein sequence, read N- to C-terminus: Cobalt-precorrin-5B C(1)-methyltransferase (381 aa).

It belongs to the CbiD family.

The enzyme catalyses Co-precorrin-5B + S-adenosyl-L-methionine = Co-precorrin-6A + S-adenosyl-L-homocysteine. The protein operates within cofactor biosynthesis; adenosylcobalamin biosynthesis; cob(II)yrinate a,c-diamide from sirohydrochlorin (anaerobic route): step 6/10. Functionally, catalyzes the methylation of C-1 in cobalt-precorrin-5B to form cobalt-precorrin-6A. The chain is Cobalt-precorrin-5B C(1)-methyltransferase from Methylococcus capsulatus (strain ATCC 33009 / NCIMB 11132 / Bath).